The sequence spans 250 residues: AA9 family lytic polysaccharide monooxygenase AA17 (250 aa).

The first 21 residues, 1–21 (MAMSKIVSLTGLLASASLVAG), serve as a signal peptide directing secretion. Positions 22 and 107 each coordinate Cu(2+). Cystine bridges form between Cys-77/Cys-199 and Cys-118/Cys-122. Asn-159 is a glycosylation site (N-linked (GlcNAc...) asparagine). O2 contacts are provided by His-185 and Gln-194. Residue Tyr-196 coordinates Cu(2+).

It belongs to the polysaccharide monooxygenase AA9 family. The cofactor is Cu(2+).

Its subcellular location is the secreted. Its function is as follows. Lytic polysaccharide monooxygenase (LPMO) that exhibits oxidative cleavage beta-O-4 linkage of lignin resulting in the formation of aromatic compound guaiacol. Catalysis by LPMOs requires the reduction of the active-site copper from Cu(II) to Cu(I) by a reducing agent and H(2)O(2) or O(2) as a cosubstrate. Does not use cellulose, cello-oligosaccharides, xyloglucan, xylan, chitin nor starch as substrates. Able to depolymerize the lignin dimer guaicyl glycerol beta-guaicyl ether (GGE). The sequence is that of AA9 family lytic polysaccharide monooxygenase AA17 from Aspergillus oryzae (strain ATCC 42149 / RIB 40) (Yellow koji mold).